The chain runs to 307 residues: MDIETFLAGERAADGYRCGFVAIVGRPNVGKSTLMNHLIGQKISITSKKAQTTRNRVTGIYTDDTAQFVFVDTPGFQTDHRNALNDRLNQNVTEALGGVDVVVFVVEAMRFTDADRVVLKQLPKHTPVILVVNKIDKDKAKDRYALEAFVAQVRAEFEFAAAEAVSAKHGLRIANLLELIKPYLPESVPMYPEDMVTDKSARFLAMEIVREKLFRYLGEELPYAMNVEVEQFEEEDGLNRIYIAVLVDKESQKAILIGKGGERLKKISTEARLDMEKLFDTKVFLKVWVKVKSGWADDIRFLRELGL.

The Era-type G domain occupies 17–186 (RCGFVAIVGR…LELIKPYLPE (170 aa)). The G1 stretch occupies residues 25–32 (GRPNVGKS). A GTP-binding site is contributed by 25–32 (GRPNVGKS). A G2 region spans residues 51–55 (QTTRN). Residues 72-75 (DTPG) form a G3 region. Residues 72–76 (DTPGF) and 133–136 (NKID) each bind GTP. The segment at 133–136 (NKID) is G4. Residues 165–167 (VSA) are G5. The KH type-2 domain occupies 217–293 (LGEELPYAMN…FLKVWVKVKS (77 aa)).

This sequence belongs to the TRAFAC class TrmE-Era-EngA-EngB-Septin-like GTPase superfamily. Era GTPase family. Monomer.

It is found in the cytoplasm. It localises to the cell inner membrane. Its function is as follows. An essential GTPase that binds both GDP and GTP, with rapid nucleotide exchange. Plays a role in 16S rRNA processing and 30S ribosomal subunit biogenesis and possibly also in cell cycle regulation and energy metabolism. The polypeptide is GTPase Era (Neisseria meningitidis serogroup A / serotype 4A (strain DSM 15465 / Z2491)).